Consider the following 240-residue polypeptide: Ribosomal RNA small subunit methyltransferase G (240 aa).

S-adenosyl-L-methionine-binding positions include Gly-80, Phe-85, 103–105, 131–132, and Arg-150; these read DSS and AE.

This sequence belongs to the methyltransferase superfamily. RNA methyltransferase RsmG family.

Its subcellular location is the cytoplasm. Its function is as follows. Specifically methylates the N7 position of a guanine in 16S rRNA. The polypeptide is Ribosomal RNA small subunit methyltransferase G (Thermoanaerobacter pseudethanolicus (strain ATCC 33223 / 39E) (Clostridium thermohydrosulfuricum)).